Reading from the N-terminus, the 306-residue chain is Pantothenate kinase (306 aa).

An ATP-binding site is contributed by Gly-91–Ser-98.

The protein belongs to the prokaryotic pantothenate kinase family.

It localises to the cytoplasm. The catalysed reaction is (R)-pantothenate + ATP = (R)-4'-phosphopantothenate + ADP + H(+). It participates in cofactor biosynthesis; coenzyme A biosynthesis; CoA from (R)-pantothenate: step 1/5. This is Pantothenate kinase from Streptococcus suis (strain 05ZYH33).